Here is a 173-residue protein sequence, read N- to C-terminus: Co-chaperone protein HscB homolog (173 aa).

Residues 2 to 74 (NYFELFSLSP…ISRAEHMLSL (73 aa)) enclose the J domain.

Belongs to the HscB family. Interacts with HscA and stimulates its ATPase activity.

Co-chaperone involved in the maturation of iron-sulfur cluster-containing proteins. Seems to help targeting proteins to be folded toward HscA. In Shewanella loihica (strain ATCC BAA-1088 / PV-4), this protein is Co-chaperone protein HscB homolog.